The sequence spans 511 residues: Trafficking protein particle complex subunit 13 homolog (511 aa).

Belongs to the TRAPPC13 family.

The polypeptide is Trafficking protein particle complex subunit 13 homolog (Dictyostelium discoideum (Social amoeba)).